A 403-amino-acid chain; its full sequence is Tryptophan synthase beta chain 1 (403 aa).

K96 is subject to N6-(pyridoxal phosphate)lysine.

This sequence belongs to the TrpB family. As to quaternary structure, tetramer of two alpha and two beta chains. Requires pyridoxal 5'-phosphate as cofactor.

The catalysed reaction is (1S,2R)-1-C-(indol-3-yl)glycerol 3-phosphate + L-serine = D-glyceraldehyde 3-phosphate + L-tryptophan + H2O. It functions in the pathway amino-acid biosynthesis; L-tryptophan biosynthesis; L-tryptophan from chorismate: step 5/5. The beta subunit is responsible for the synthesis of L-tryptophan from indole and L-serine. In Wolinella succinogenes (strain ATCC 29543 / DSM 1740 / CCUG 13145 / JCM 31913 / LMG 7466 / NCTC 11488 / FDC 602W) (Vibrio succinogenes), this protein is Tryptophan synthase beta chain 1 (trpB1).